We begin with the raw amino-acid sequence, 846 residues long: Putative transcriptional regulator tpeD (846 aa).

The BED-type; degenerate zinc finger occupies 104–166 (KHQSECWQHF…NCRKSVPVSK (63 aa)). The interval 734-846 (RAREERDAQQ…RDEDFVYETP (113 aa)) is disordered. A compositionally biased stretch (acidic residues) spans 756 to 769 (PISDSEEAESEDES). Over residues 773 to 786 (PQSPQASQARSQRS) the composition is skewed to low complexity. Over residues 797 to 809 (PLIELDGNEEDEV) the composition is skewed to acidic residues.

It is found in the nucleus. Putative transcriptional regulator; part of the gene cluster that mediates the biosynthesis of polyesters containing 2,4-dihydroxy-6-(2-hydroxypropyl)benzoate and 3-hydroxybutyrate moieties, such as talapolyester G, 15G256beta and 15G256beta-2; as well as to oxidized derivatives such as 15G256alpha. In Talaromyces stipitatus (strain ATCC 10500 / CBS 375.48 / QM 6759 / NRRL 1006) (Penicillium stipitatum), this protein is Putative transcriptional regulator tpeD.